A 99-amino-acid chain; its full sequence is Small ribosomal subunit protein bS18 (99 aa).

Residues 1–25 (MAESKGRPGSASQRPTGGDKAIAGQ) are disordered.

Belongs to the bacterial ribosomal protein bS18 family. In terms of assembly, part of the 30S ribosomal subunit. Forms a tight heterodimer with protein bS6.

Binds as a heterodimer with protein bS6 to the central domain of the 16S rRNA, where it helps stabilize the platform of the 30S subunit. In Solibacter usitatus (strain Ellin6076), this protein is Small ribosomal subunit protein bS18.